A 309-amino-acid polypeptide reads, in one-letter code: Taste receptor type 2 member 31 (309 aa).

Over 1 to 2 (MI) the chain is Extracellular. A helical membrane pass occupies residues 3–23 (TFLPTIFSILVVVIFVIGNFG). At 24–55 (NGFIALVNSIEWVKRQKISFADQILTALAVSR) the chain is on the cytoplasmic side. A helical transmembrane segment spans residues 56-76 (VGLLWALLLNWYSTVFNPAFY). The Extracellular portion of the chain corresponds to 77-100 (SVGVRTTVYDVWTVTGHFSNWLAT). Residues 101 to 121 (SLSIFYLLKIANFSNLIFLHL) form a helical membrane-spanning segment. The Cytoplasmic segment spans residues 122-126 (KRRVK). The chain crosses the membrane as a helical span at residues 127-147 (SVILVMLLGPLLFLACQLFVI). Over 148–181 (NMKEILRTKEYEGNMTWKIKLRSAMYLSDATITT) the chain is Extracellular. An N-linked (GlcNAc...) asparagine glycan is attached at N161. Residues 182–202 (LANLVPFTLTLLSFLLLICSL) traverse the membrane as a helical segment. Residues 203 to 229 (CKHLNKMQLHGKGSQDPSTKVHIKVLQ) lie on the Cytoplasmic side of the membrane. The chain crosses the membrane as a helical span at residues 230–250 (TVISFLLLCAIYFLSIMISVW). Over 251 to 259 (SFGSLENKP) the chain is Extracellular. A helical membrane pass occupies residues 260 to 280 (VFMFCKAIRFSYPSIHPFILI). Residues 281–309 (WGNKKLKQTFLSVLRQVRYWVKGEKPSSP) lie on the Cytoplasmic side of the membrane.

This sequence belongs to the G-protein coupled receptor T2R family.

The protein localises to the membrane. Functionally, receptor that may play a role in the perception of bitterness and is gustducin-linked. May play a role in sensing the chemical composition of the gastrointestinal content. The activity of this receptor may stimulate alpha gustducin, mediate PLC-beta-2 activation and lead to the gating of TRPM5. The chain is Taste receptor type 2 member 31 (TAS2R31) from Pongo pygmaeus (Bornean orangutan).